Reading from the N-terminus, the 151-residue chain is Pyruvoyl-dependent arginine decarboxylase (151 aa).

The residue at position 42 (Ser-42) is a Pyruvic acid (Ser).

The protein belongs to the PdaD family. Pyruvate serves as cofactor.

The enzyme catalyses L-arginine + H(+) = agmatine + CO2. This chain is Pyruvoyl-dependent arginine decarboxylase, found in Methanothermobacter thermautotrophicus (strain ATCC 29096 / DSM 1053 / JCM 10044 / NBRC 100330 / Delta H) (Methanobacterium thermoautotrophicum).